The chain runs to 179 residues: Inner membrane-spanning protein YciB (179 aa).

6 helical membrane-spanning segments follow: residues 3–23 (FLFD…ADIY), 24–44 (TATA…WFRH), 49–69 (PMQW…LVLH), 76–96 (WKPT…VLVW), 121–141 (LAWA…AYQF), and 149–169 (FKLF…SVWL).

The protein belongs to the YciB family.

The protein resides in the cell inner membrane. Functionally, plays a role in cell envelope biogenesis, maintenance of cell envelope integrity and membrane homeostasis. This Cupriavidus taiwanensis (strain DSM 17343 / BCRC 17206 / CCUG 44338 / CIP 107171 / LMG 19424 / R1) (Ralstonia taiwanensis (strain LMG 19424)) protein is Inner membrane-spanning protein YciB.